A 156-amino-acid polypeptide reads, in one-letter code: uncharacterized protein (156 aa).

Helical transmembrane passes span 6-26 (LIVL…PYFA), 34-54 (FWKF…HQMP), 68-88 (CARC…YPFI), 100-120 (WYLI…LIGL), and 129-149 (FITG…IFFE).

Its subcellular location is the cell membrane. This is an uncharacterized protein from Methanocaldococcus jannaschii (strain ATCC 43067 / DSM 2661 / JAL-1 / JCM 10045 / NBRC 100440) (Methanococcus jannaschii).